A 55-amino-acid polypeptide reads, in one-letter code: Regulatory protein MokB (55 aa).

Its function is as follows. Overlapping regulatory peptide whose translation enables hokB expression. This Escherichia coli (strain K12) protein is Regulatory protein MokB (mokB).